The chain runs to 99 residues: Aspartyl/glutamyl-tRNA(Asn/Gln) amidotransferase subunit C (99 aa).

The protein belongs to the GatC family. In terms of assembly, heterotrimer of A, B and C subunits.

It carries out the reaction L-glutamyl-tRNA(Gln) + L-glutamine + ATP + H2O = L-glutaminyl-tRNA(Gln) + L-glutamate + ADP + phosphate + H(+). The enzyme catalyses L-aspartyl-tRNA(Asn) + L-glutamine + ATP + H2O = L-asparaginyl-tRNA(Asn) + L-glutamate + ADP + phosphate + 2 H(+). Functionally, allows the formation of correctly charged Asn-tRNA(Asn) or Gln-tRNA(Gln) through the transamidation of misacylated Asp-tRNA(Asn) or Glu-tRNA(Gln) in organisms which lack either or both of asparaginyl-tRNA or glutaminyl-tRNA synthetases. The reaction takes place in the presence of glutamine and ATP through an activated phospho-Asp-tRNA(Asn) or phospho-Glu-tRNA(Gln). This chain is Aspartyl/glutamyl-tRNA(Asn/Gln) amidotransferase subunit C, found in Corynebacterium diphtheriae (strain ATCC 700971 / NCTC 13129 / Biotype gravis).